Consider the following 829-residue polypeptide: pre-rRNA 2'-O-ribose RNA methyltransferase FTSJ3 (829 aa).

Residues glycine 56, tryptophan 58, aspartate 76, aspartate 92, and aspartate 117 each coordinate S-adenosyl-L-methionine. Lysine 157 serves as the catalytic Proton acceptor. The interval 332–367 (ISLSSEEEGDEEESAAETKQASEEEEEREEEEQLNR) is disordered. Phosphoserine occurs at positions 333, 335, 336, 345, and 353. A compositionally biased stretch (acidic residues) spans 336–346 (SEEEGDEEESA). Over residues 354–363 (EEEEEREEEE) the composition is skewed to acidic residues. Arginine 389 is modified (citrulline). Disordered stretches follow at residues 443 to 508 (FLSD…PLLV) and 528 to 634 (DGFS…GFEV). Positions 456-473 (DAEDDDDTSLESDLDPEE) are enriched in acidic residues. A phosphoserine mark is found at serine 531 and serine 544. Lysine 570 participates in a covalent cross-link: Glycyl lysine isopeptide (Lys-Gly) (interchain with G-Cter in SUMO2). A Phosphoserine modification is found at serine 575. Residues lysine 626 and lysine 642 each participate in a glycyl lysine isopeptide (Lys-Gly) (interchain with G-Cter in SUMO2) cross-link. A Phosphoserine modification is found at serine 659. Lysine 661 is covalently cross-linked (Glycyl lysine isopeptide (Lys-Gly) (interchain with G-Cter in SUMO2)). Serine 671 bears the Phosphoserine mark. Residue lysine 693 forms a Glycyl lysine isopeptide (Lys-Gly) (interchain with G-Cter in SUMO2) linkage. Residues 722 to 760 (IKKVAEAKARKKRRMLKKLEQTKKKAEAVVNTVDISERE) are a coiled coil. Arginine 766 carries the post-translational modification Citrulline. The span at 794–804 (VRRPAGVRGHF) shows a compositional bias: basic residues. The interval 794–829 (VRRPAGVRGHFKVVDSRMKKDQRAQRKEQKRNHRRK) is disordered. Residues 805–820 (KVVDSRMKKDQRAQRK) are compositionally biased toward basic and acidic residues.

This sequence belongs to the class I-like SAM-binding methyltransferase superfamily. RNA methyltransferase RlmE family. SPB1 subfamily. As to quaternary structure, interacts with NIP7. Post-translationally, citrullinated by PADI4.

It localises to the nucleus. It is found in the nucleolus. It carries out the reaction a ribonucleotide in rRNA + S-adenosyl-L-methionine = a 2'-O-methylribonucleotide in rRNA + S-adenosyl-L-homocysteine + H(+). Its function is as follows. RNA 2'-O-methyltransferase involved in the processing of the 34S pre-rRNA to 18S rRNA and in 40S ribosomal subunit formation. In Rattus norvegicus (Rat), this protein is pre-rRNA 2'-O-ribose RNA methyltransferase FTSJ3 (Ftsj3).